A 60-amino-acid chain; its full sequence is Potassium channel toxin alpha-KTx 3.16 (60 aa).

The N-terminal stretch at 1-23 (MKVFSAVLIILFVCSMIIGISEG) is a signal peptide. Disulfide bonds link Cys-30–Cys-50, Cys-36–Cys-55, and Cys-40–Cys-57.

It belongs to the short scorpion toxin superfamily. Potassium channel inhibitor family. Alpha-KTx 03 subfamily. In terms of tissue distribution, expressed by the venom gland.

The protein localises to the secreted. Its function is as follows. Potassium channel inhibitor. The sequence is that of Potassium channel toxin alpha-KTx 3.16 from Mesobuthus gibbosus (Mediterranean checkered scorpion).